Reading from the N-terminus, the 474-residue chain is Immunoglobulin heavy constant mu (474 aa).

The tract at residues 1-105 is CH1; sequence GSASAPTLFP…NKEKNVPLPV (105 aa). The Extracellular segment spans residues 1-450; that stretch reads GSASAPTLFP…EEGFENLWAT (450 aa). 4 consecutive Ig-like domains span residues 6 to 102, 111 to 211, 229 to 319, and 329 to 430; these read PTLF…KNVP, PKVS…QNAS, PSFA…QTIS, and PDVY…RTVD. 2 disulfide bridges follow: C28-C88 and C134-C197. N-linked (GlcNAc...) (complex) asparagine glycosylation is present at N46. The CH2 stretch occupies residues 106 to 217; it reads IAELPPKVSV…QNASSMCVPD (112 aa). N-linked (GlcNAc...) (complex) asparagine glycosylation is present at N209. The interval 218–323 is CH3; it reads QDTAIRVFAI…LKQTISRPKG (106 aa). 2 cysteine pairs are disulfide-bonded: C244-C303 and C351-C413. N-linked (GlcNAc...) asparagine glycans are attached at residues N272 and N279. The segment at 324–452 is CH4; that stretch reads VALHRPDVYL…GFENLWATAS (129 aa). The important for IgM oligomerization stretch occupies residues 437 to 453; sequence VSADEEGFENLWATAST. D440 carries an N-linked (GlcNAc...) asparagine glycan. The chain crosses the membrane as a helical span at residues 451–471; that stretch reads ASTFIVLFLLSLFYSTTVTLF. Topologically, residues 472-474 are cytoplasmic; sequence KVK.

In terms of assembly, the basic structural unit of both sIgM and mIgM molecules consists of two identical heavy chains and two identical light chains; disulfide-linked. N-terminal variable regions of the heavy and light chains form the antigen binding sites, whereas the C-terminal constant regions of the heavy chains interact with immune receptors to mediate effector functions. Part of IgM antibody. Forms high order oligomers, homopentamers stabilized by the JCHAIN and homohexamers that lack JCHAIN. The oligomerization amplifies an inherently low affinity of IgM antibodies for the antigen by multi-point attachment (avidity). Adjacent IgM protomers associate via interchain disulfide links to form an asymmetric pentameric structure with a 50 degree gap. A single copy of JCHAIN is covalently linked to the first and the fifth IgM monomers via interchain disulfide bonds thus closing the pentamer ring. Only JCHAIN-containing IgM binds PIGR secretory component (via D1-CDR1 region); this interaction is a prerequisite for IgM transcytosis across mucosal epithelium. Pentameric sIgM interacts (via CH4 domain) with FCRM (via Ig-like domain); the interaction is glycan-independent and multivalent theoretically involving up to eight binding sites for the IgM pentamer. Interacts with FCAMR; this interaction facilitates the endocytosis of IgM-coated microbes or IgM-antigen immune complexes. Antigen-bound IgM (via the Fc region) binds to globular domains of C1q component of the complement system, all three modules C1QA, C1QB and C1QC being involved in IgM binding; this interaction is multivalent. Pentameric sIgM (via Fc region) interacts with CD5L (via SRCR2) through interchain disulfide-linkages; this interaction protects CD5L from renal excretion and provides for high levels of CD5L in circulation. As to quaternary structure, part of IgM B cell receptor complex on pre-B cells, immature and mature B cells. The BCR complex consists of one membrane-bound IgM molecule responsible for antigen binding, non-covalently associated with CD79A and CD79B signaling chains. In terms of processing, N-glycosylated; important for IgM secretion and its localization at the plasma membrane. The interaction with FCMR is glycan-independent.

It localises to the secreted. The protein resides in the cell membrane. Constant region of immunoglobulin heavy chains. Immunoglobulins, also known as antibodies, are membrane-bound or secreted glycoproteins produced by B lymphocytes. In the recognition phase of humoral immunity, the membrane-bound immunoglobulins serve as receptors which, upon binding of a specific antigen, trigger the clonal expansion and differentiation of B lymphocytes into immunoglobulins-secreting plasma cells. Secreted immunoglobulins mediate the effector phase of humoral immunity, which results in the elimination of bound antigens. The antigen binding site is formed by the variable domain of one heavy chain, together with that of its associated light chain. Thus, each immunoglobulin has two antigen binding sites with remarkable affinity for a particular antigen. The variable domains are assembled by a process called V-(D)-J rearrangement and can then be subjected to somatic hypermutations which, after exposure to antigen and selection, allow affinity maturation for a particular antigen. In terms of biological role, constant region of secreted IgM (sIgM), also known as the Fc region of IgM antibody. Able to multimerize, forms high order polymers, mainly pentamers and occasionally hexamers, providing for multivalency and high avidity recognition of antigens. Natural sIgM are polyreactive and recognize conserved self- and pathogen-derived structures, whereas immune sIgM are secreted only upon exposure to pathogens and are antigen-specific. Both natural and immune sIgM are required for an efficient humoral immune response to infection. Mediates sIgM effector functions mostly via Fc receptors and the complement system. On lymphoid cells binds high-affinity Fc receptor FCMR and promotes induction of an efficient neutralizing IgG response while maintaining tolerance to self-antigens. Recruits C1q complement component to initiate the classical complement pathway, facilitating the recognition and neutralization of pathogens by the host. Together with C1q and mannose-binding lectin promotes the phagocytosis of apoptotic cells by macrophages, ensuring the clearance of potential autoimmune epitopes from tissues. Involved in mucosal immunity. It is transported by transcytosis across mucosal epithelium by PIGR and secreted on the apical side in complex with PIGR secretory component to scan mucosal lining for pathogens. IgM-antigen complexes undergo FCMR-mediated retrotranscytosis across mucosal M cells toward antigen-presenting cells in mucosal lymphoid tissues. Its function is as follows. Constant region of membrane-bound IgM, part of the B cell receptor complex (BCR). IgM BCR provides constitutive tonic signaling for B cell survival. Mediates pre-BCR signaling that regulates B cell selection and rearrangement of Ig genes via allelic exclusion. In Homo sapiens (Human), this protein is Immunoglobulin heavy constant mu.